Here is a 309-residue protein sequence, read N- to C-terminus: Protein FdhE (309 aa).

It belongs to the FdhE family.

The protein resides in the cytoplasm. Necessary for formate dehydrogenase activity. This Escherichia coli (strain K12 / MC4100 / BW2952) protein is Protein FdhE.